The sequence spans 350 residues: MSKFVKKIKIIKPDDWHVHLRDNEILNQVIKYTGKFYKRAVIMPNLNSPITSCLKSIAYRNRILKSMHLNYKFKPLMTCYLTNSTSPKELEFGFSKKIFVAAKFYPNGCTTNSKTGIKKISDITPVLECMEKIGMPLLIHGEEINQNIDIYDREAKFIEKTLDPLRKKFPKLKIVLEHITTKESVEYIKNNDVNYLSATITPHHLMLNRNDMFYGGIQPYLYCLPILKKNKHRMALRKAISNGDKHFFLGSDTAPHLHKNKINMLGCAGIFNAPSSLLSYVKVFEEMRALKYLQSFCSENGPKFYNMPINKETITIIKKPCKIIKKINVGRNVIIPFLSGEILNWSIESD.

Positions 17 and 19 each coordinate Zn(2+). Substrate-binding positions include 19-21 and Asn-45; that span reads HLR. Zn(2+)-binding residues include Lys-103, His-140, and His-178. An N6-carboxylysine modification is found at Lys-103. Position 140 (His-140) interacts with substrate. Leu-224 is a substrate binding site. Zn(2+) is bound at residue Asp-252. The active site involves Asp-252. Substrate contacts are provided by His-256 and Ala-268.

This sequence belongs to the metallo-dependent hydrolases superfamily. DHOase family. Class II DHOase subfamily. In terms of assembly, homodimer. It depends on Zn(2+) as a cofactor.

The catalysed reaction is (S)-dihydroorotate + H2O = N-carbamoyl-L-aspartate + H(+). It functions in the pathway pyrimidine metabolism; UMP biosynthesis via de novo pathway; (S)-dihydroorotate from bicarbonate: step 3/3. In terms of biological role, catalyzes the reversible cyclization of carbamoyl aspartate to dihydroorotate. This chain is Dihydroorotase, found in Buchnera aphidicola subsp. Acyrthosiphon pisum (strain APS) (Acyrthosiphon pisum symbiotic bacterium).